Here is a 427-residue protein sequence, read N- to C-terminus: Light-independent protochlorophyllide reductase subunit N (427 aa).

Residues Cys-28, Cys-53, and Cys-114 each contribute to the [4Fe-4S] cluster site.

The protein belongs to the BchN/ChlN family. Protochlorophyllide reductase is composed of three subunits; BchL, BchN and BchB. Forms a heterotetramer of two BchB and two BchN subunits. It depends on [4Fe-4S] cluster as a cofactor.

The catalysed reaction is chlorophyllide a + oxidized 2[4Fe-4S]-[ferredoxin] + 2 ADP + 2 phosphate = protochlorophyllide a + reduced 2[4Fe-4S]-[ferredoxin] + 2 ATP + 2 H2O. It participates in porphyrin-containing compound metabolism; bacteriochlorophyll biosynthesis (light-independent). In terms of biological role, component of the dark-operative protochlorophyllide reductase (DPOR) that uses Mg-ATP and reduced ferredoxin to reduce ring D of protochlorophyllide (Pchlide) to form chlorophyllide a (Chlide). This reaction is light-independent. The NB-protein (BchN-BchB) is the catalytic component of the complex. This is Light-independent protochlorophyllide reductase subunit N from Dinoroseobacter shibae (strain DSM 16493 / NCIMB 14021 / DFL 12).